Here is a 427-residue protein sequence, read N- to C-terminus: ETS domain-containing protein Elk-1 (427 aa).

A DNA-binding region (ETS) is located at residues 5–86; the sequence is VTLWQFLLQL…SGQKFVYKFV (82 aa). Disordered stretches follow at residues 116-146, 166-202, and 226-252; these read ATVH…GLAR, LQPQ…SPNP, and PNQK…VEGP. Glycyl lysine isopeptide (Lys-Gly) (interchain with G-Cter in SUMO) cross-links involve residues K229, K248, and K253. Positions 300-310 are enriched in polar residues; sequence STSTTEITQPQ. The disordered stretch occupies residues 300–350; the sequence is STSTTEITQPQKGRKPRDLELPLSPSLLGGQGPERTPGSGTSSGLQAQGPA. S323 bears the Phosphoserine; by MAPK1 mark. Residues T335, T352, T362, and T367 each carry the phosphothreonine; by MAPK1 modification. The tract at residues 348-398 is sufficient for interaction with MAD2L2; sequence GPALTPSLLPTHTLTPVLLTPSSLPPSIHFWSTLSPIAPRSPAKLSFQFPS. An O-linked (GlcNAc) threonine glycan is attached at T380. S382 is modified (phosphoserine; by MAPK1 and MAPK8). Position 388 is a phosphoserine; by MAPK1 (S388). At T416 the chain carries Phosphothreonine; by MAPK1. S421 is modified (phosphoserine; by MAPK1).

The protein belongs to the ETS family. In terms of assembly, interacts in its sumoylated form with PIAS2/PIASX which enhances its transcriptional activator activity. Interacts with MAD2L2; the interaction is direct and promotes phosphorylation by the kinases MAPK8 and/or MAPK9. Interacts with POU1F1. Sumoylation represses transcriptional activator activity as it results in recruitment of HDAC2 to target gene promoters which leads to decreased histone acetylation and reduced transactivator activity. It also regulates nuclear retention. In terms of processing, on mitogenic stimulation, phosphorylated on C-terminal serine and threonine residues by MAPK1. Ser-382 and Ser-388 are the preferred sites for MAPK1. In vitro, phosphorylation by MAPK1 potentiates ternary complex formation with the serum responses factors, SRE and SRF. Also phosphorylated on Ser-382 by MAPK8 and/or MAKP9. Phosphorylation leads to loss of sumoylation and restores transcriptional activator activity. Phosphorylated and activated by CAMK4, MAPK11, MAPK12 and MAPK14. Upon bFGF stimulus, phosphorylated by PAK1. Phosphorylated by PRP4K at Thr-416; phosphorylation activation ELK1 transcriptional activity.

The protein resides in the nucleus. Its function is as follows. Transcription factor that binds to purine-rich DNA sequences. Forms a ternary complex with SRF and the ETS and SRF motifs of the serum response element (SRE) on the promoter region of immediate early genes such as FOS and IER2. Induces target gene transcription upon JNK and MAPK-signaling pathways stimulation. This chain is ETS domain-containing protein Elk-1, found in Rattus norvegicus (Rat).